A 214-amino-acid chain; its full sequence is Melanoregulin (214 aa).

The Cholesterol-binding sequence motif motif lies at 162–172; that stretch reads LSERYLFVVDR. Residue Ser213 is modified to Phosphoserine.

This sequence belongs to the melanoregulin family. In terms of assembly, identified in a complex with RILP and DCTN1; interacts directly with RILP, but does not interact directly with DCTN1. Interacts with PRPH2. In terms of processing, palmitoylated. Palmitoylation is required to maintain the protein at the melanosome membrane. Expressed in photoreceptor cells (at protein level).

Its subcellular location is the apical cell membrane. It localises to the melanosome membrane. It is found in the lysosome membrane. The protein resides in the cytoplasmic vesicle membrane. In terms of biological role, probably functions as a cargo-recognition protein that couples cytoplasmic vesicles to the transport machinery. Plays a role in hair pigmentation, a process that involves shedding of melanosome-containing vesicles from melanocytes, followed by phagocytosis of the melanosome-containing vesicles by keratinocytes. Functions on melanosomes as receptor for RILP and the complex formed by RILP and DCTN1, and thereby contributes to retrograde melanosome transport from the cell periphery to the center. Overexpression causes accumulation of late endosomes and/or lysosomes at the microtubule organising center (MTOC) at the center of the cell. Probably binds cholesterol and requires the presence of cholesterol in membranes to function in microtubule-mediated retrograde organelle transport. Binds phosphatidylinositol 3-phosphate, phosphatidylinositol 4-phosphate, phosphatidylinositol 5-phosphate and phosphatidylinositol 3,5-bisphosphate, but not phosphatidylinositol 3,4-bisphosphate or phosphatidylinositol 4,5-bisphosphate. Required for normal phagosome clearing and normal activation of lysosomal enzymes in lysosomes from retinal pigment epithelium cells. Required for normal degradation of the lipofuscin component N-retinylidene-N-retinylethanolamine (A2E) in the eye. May function in membrane fusion and regulate the biogenesis of disk membranes of photoreceptor rod cells. In Homo sapiens (Human), this protein is Melanoregulin (MREG).